Here is a 369-residue protein sequence, read N- to C-terminus: Probable trehalose-phosphate phosphatase D (369 aa).

The interval 63–85 (RASSPTRTRPGNISPLPESDEED) is disordered.

The protein belongs to the trehalose phosphatase family. Requires a divalent metal cation as cofactor.

It catalyses the reaction alpha,alpha-trehalose 6-phosphate + H2O = alpha,alpha-trehalose + phosphate. The protein operates within glycan biosynthesis; trehalose biosynthesis. Functionally, removes the phosphate from trehalose 6-phosphate to produce free trehalose. Trehalose accumulation in plant may improve abiotic stress tolerance. This Arabidopsis thaliana (Mouse-ear cress) protein is Probable trehalose-phosphate phosphatase D (TPPD).